The sequence spans 188 residues: dCTP deaminase (188 aa).

DCTP is bound by residues Lys111–Arg116, Thr135–Glu137, Gln156, Tyr170, and Gln180. Glu137 functions as the Proton donor/acceptor in the catalytic mechanism.

This sequence belongs to the dCTP deaminase family. In terms of assembly, homotrimer.

The catalysed reaction is dCTP + H2O + H(+) = dUTP + NH4(+). It participates in pyrimidine metabolism; dUMP biosynthesis; dUMP from dCTP (dUTP route): step 1/2. Functionally, catalyzes the deamination of dCTP to dUTP. This Pseudomonas savastanoi pv. phaseolicola (strain 1448A / Race 6) (Pseudomonas syringae pv. phaseolicola (strain 1448A / Race 6)) protein is dCTP deaminase.